Reading from the N-terminus, the 245-residue chain is 5-oxoprolinase subunit A (245 aa).

Belongs to the LamB/PxpA family. As to quaternary structure, forms a complex composed of PxpA, PxpB and PxpC.

It carries out the reaction 5-oxo-L-proline + ATP + 2 H2O = L-glutamate + ADP + phosphate + H(+). In terms of biological role, catalyzes the cleavage of 5-oxoproline to form L-glutamate coupled to the hydrolysis of ATP to ADP and inorganic phosphate. The sequence is that of 5-oxoprolinase subunit A from Haemophilus influenzae (strain PittGG).